The primary structure comprises 118 residues: Holo-[acyl-carrier-protein] synthase (118 aa).

The Mg(2+) site is built by Asp8 and Glu58.

The protein belongs to the P-Pant transferase superfamily. AcpS family. Mg(2+) is required as a cofactor.

Its subcellular location is the cytoplasm. It catalyses the reaction apo-[ACP] + CoA = holo-[ACP] + adenosine 3',5'-bisphosphate + H(+). In terms of biological role, transfers the 4'-phosphopantetheine moiety from coenzyme A to a Ser of acyl-carrier-protein. This is Holo-[acyl-carrier-protein] synthase from Streptococcus pyogenes serotype M28 (strain MGAS6180).